The chain runs to 475 residues: Ataxin-10 (475 aa).

At Arg-10 the chain carries Omega-N-methylarginine. A phosphoserine mark is found at Ser-12 and Ser-77. Thr-82 bears the Phosphothreonine mark. The residue at position 430 (Ser-430) is a Phosphoserine.

The protein belongs to the ataxin-10 family. In terms of assembly, homooligomer. Interacts with GNB2. Interacts with IQCB1. Interacts with OGT. In terms of processing, polyubiquitinated. Phosphorylation at Ser-12 by AURKB promotes the association of ATXN10 with PLK1. Phosphorylation at Ser-77 and Thr-82 by PLK1 may play a role in the regulation of cytokinesis and may stimulate the proteasome-mediated degradation of ATXN10.

Its subcellular location is the cytoplasm. The protein resides in the perinuclear region. It localises to the cytoskeleton. It is found in the cilium basal body. The protein localises to the microtubule organizing center. Its subcellular location is the centrosome. The protein resides in the centriole. It localises to the midbody. In terms of biological role, may play a role in the regulation of cytokinesis. May play a role in signaling by stimulating protein glycosylation. Induces neuritogenesis by activating the Ras-MAP kinase pathway and is necessary for the survival of cerebellar neurons. Does not appear to play a major role in ciliogenesis. This Bos taurus (Bovine) protein is Ataxin-10 (ATXN10).